The chain runs to 416 residues: Lipoyl synthase, mitochondrial (416 aa).

The transit peptide at 1–33 directs the protein to the mitochondrion; it reads MAAPTRSLRRLSSFRTTISPSLTVTAPIGCRSY. Residues Cys132, Cys137, Cys143, Cys163, Cys167, Cys170, and Ser378 each contribute to the [4Fe-4S] cluster site. The Radical SAM core domain occupies 148–367; that stretch reads DKSSATATIM…RQRALDMGFL (220 aa). The segment at 396–416 is disordered; sequence GSGTAERTVDQTAATTDEATR. Polar residues predominate over residues 405–416; the sequence is DQTAATTDEATR.

It belongs to the radical SAM superfamily. Lipoyl synthase family. It depends on [4Fe-4S] cluster as a cofactor.

The protein resides in the mitochondrion. The catalysed reaction is [[Fe-S] cluster scaffold protein carrying a second [4Fe-4S](2+) cluster] + N(6)-octanoyl-L-lysyl-[protein] + 2 oxidized [2Fe-2S]-[ferredoxin] + 2 S-adenosyl-L-methionine + 4 H(+) = [[Fe-S] cluster scaffold protein] + N(6)-[(R)-dihydrolipoyl]-L-lysyl-[protein] + 4 Fe(3+) + 2 hydrogen sulfide + 2 5'-deoxyadenosine + 2 L-methionine + 2 reduced [2Fe-2S]-[ferredoxin]. Its pathway is protein modification; protein lipoylation via endogenous pathway; protein N(6)-(lipoyl)lysine from octanoyl-[acyl-carrier-protein]: step 2/2. Catalyzes the radical-mediated insertion of two sulfur atoms into the C-6 and C-8 positions of the octanoyl moiety bound to the lipoyl domains of lipoate-dependent enzymes, thereby converting the octanoylated domains into lipoylated derivatives. The polypeptide is Lipoyl synthase, mitochondrial (Penicillium rubens (strain ATCC 28089 / DSM 1075 / NRRL 1951 / Wisconsin 54-1255) (Penicillium chrysogenum)).